Reading from the N-terminus, the 98-residue chain is NADH-ubiquinone oxidoreductase chain 4L (98 aa).

Transmembrane regions (helical) follow at residues 1–21 (MSPI…GLLI), 30–50 (LLCL…LALT), and 61–81 (IILL…LVMV).

It belongs to the complex I subunit 4L family. In terms of assembly, core subunit of respiratory chain NADH dehydrogenase (Complex I) which is composed of 45 different subunits.

It localises to the mitochondrion inner membrane. It carries out the reaction a ubiquinone + NADH + 5 H(+)(in) = a ubiquinol + NAD(+) + 4 H(+)(out). Core subunit of the mitochondrial membrane respiratory chain NADH dehydrogenase (Complex I) which catalyzes electron transfer from NADH through the respiratory chain, using ubiquinone as an electron acceptor. Part of the enzyme membrane arm which is embedded in the lipid bilayer and involved in proton translocation. The chain is NADH-ubiquinone oxidoreductase chain 4L (MT-ND4L) from Chrysochloris asiatica (Cape golden mole).